The following is a 313-amino-acid chain: Protein FixB (313 aa).

Residue 255-283 (LYLAVGISGQIQHMVGANASQTIFAINKD) participates in FAD binding.

Belongs to the ETF alpha-subunit/FixB family. In terms of assembly, heterodimer of FixA and FixB.

The protein operates within amine and polyamine metabolism; carnitine metabolism. Functionally, required for anaerobic carnitine reduction. May bring reductant to CaiA. The chain is Protein FixB from Escherichia coli O139:H28 (strain E24377A / ETEC).